The chain runs to 262 residues: MTLQARNLTLARGGAPILTDVSLTLAPGALVGLLGANGAGKSTLLAALAGELAPRSGQVFLGDADLATLSARQLARRRAVLPQKPSLSFDLGVSDVVGMGAYPFPELDPAAVRQLVRDALEQAGVTHLAQRRYPQLSGGEQQRVQFARVLAQCHAMHAPGQTRYLMLDEPISNLDPRHQMELLATARALAHEAGMGVLVIVHDINQAARWCDTLALLADGRLAALGPPADVLTPDHMRRVYGIEADVLAHPTLPGRLLVLAR.

One can recognise an ABC transporter domain in the interval 3-244 (LQARNLTLAR…DHMRRVYGIE (242 aa)). 35-42 (GANGAGKS) contributes to the ATP binding site.

This sequence belongs to the ABC transporter superfamily. Heme (hemin) importer (TC 3.A.1.14.5) family. In terms of assembly, the complex is composed of two ATP-binding proteins (HmuV), two transmembrane proteins (HmuU) and a solute-binding protein (HmuT).

Its subcellular location is the cell inner membrane. In terms of biological role, part of the ABC transporter complex HmuTUV involved in hemin import. Responsible for energy coupling to the transport system. The protein is Hemin import ATP-binding protein HmuV of Bordetella pertussis (strain Tohama I / ATCC BAA-589 / NCTC 13251).